The following is a 3507-amino-acid chain: Dynein axonemal heavy chain 14 (3507 aa).

Residues 91-126 form a disordered region; it reads PHLPGTQDPLRRVRDPTPIVASSPGRRRGSWSGGYG. Positions 354–381 form a coiled coil; sequence DEFCEEQLQQATQALKQLEDIRNKAISE. The GPAGTGKT motif signature appears at 1164–1171; that stretch reads GPAGTGKT. ATP-binding positions include 1164–1171 and 1427–1434; these read GPAGTGKT and GPTGGGKT. N-linked (GlcNAc...) asparagine glycosylation is present at Asn-1818.

Belongs to the dynein heavy chain family. Consists of at least two heavy chains and a number of intermediate and light chains.

It is found in the cytoplasm. Its subcellular location is the cytoskeleton. The protein localises to the cilium axoneme. In terms of biological role, force generating protein of respiratory cilia. Produces force towards the minus ends of microtubules. Dynein has ATPase activity; the force-producing power stroke is thought to occur on release of ADP. Involved in sperm motility; implicated in sperm flagellar assembly. The sequence is that of Dynein axonemal heavy chain 14 (DNAH14) from Homo sapiens (Human).